Consider the following 209-residue polypeptide: Imidazole glycerol phosphate synthase subunit HisH (209 aa).

Positions 1–205 (MIAIIDYGMG…QGVVEAWKSS (205 aa)) constitute a Glutamine amidotransferase type-1 domain. The active-site Nucleophile is cysteine 79. Catalysis depends on residues histidine 180 and glutamate 182.

In terms of assembly, heterodimer of HisH and HisF.

It localises to the cytoplasm. It catalyses the reaction 5-[(5-phospho-1-deoxy-D-ribulos-1-ylimino)methylamino]-1-(5-phospho-beta-D-ribosyl)imidazole-4-carboxamide + L-glutamine = D-erythro-1-(imidazol-4-yl)glycerol 3-phosphate + 5-amino-1-(5-phospho-beta-D-ribosyl)imidazole-4-carboxamide + L-glutamate + H(+). It carries out the reaction L-glutamine + H2O = L-glutamate + NH4(+). It functions in the pathway amino-acid biosynthesis; L-histidine biosynthesis; L-histidine from 5-phospho-alpha-D-ribose 1-diphosphate: step 5/9. Functionally, IGPS catalyzes the conversion of PRFAR and glutamine to IGP, AICAR and glutamate. The HisH subunit catalyzes the hydrolysis of glutamine to glutamate and ammonia as part of the synthesis of IGP and AICAR. The resulting ammonia molecule is channeled to the active site of HisF. This Bacillus cereus (strain G9842) protein is Imidazole glycerol phosphate synthase subunit HisH.